The sequence spans 319 residues: 1-aminocyclopropane-1-carboxylate oxidase 4 (319 aa).

The 101-residue stretch at 153–253 folds into the Fe2OG dioxygenase domain; it reads PNFGTKVSNY…RMSLASFYNP (101 aa). His-177, Asp-179, and His-234 together coordinate Fe cation.

This sequence belongs to the iron/ascorbate-dependent oxidoreductase family. Requires Fe cation as cofactor.

It catalyses the reaction 1-aminocyclopropane-1-carboxylate + L-ascorbate + O2 = ethene + L-dehydroascorbate + hydrogen cyanide + CO2 + 2 H2O. It functions in the pathway alkene biosynthesis; ethylene biosynthesis via S-adenosyl-L-methionine; ethylene from S-adenosyl-L-methionine: step 2/2. The polypeptide is 1-aminocyclopropane-1-carboxylate oxidase 4 (ACO4) (Petunia hybrida (Petunia)).